The primary structure comprises 751 residues: Ribosome biogenesis protein ERB1 (751 aa).

Disordered regions lie at residues 1–140 (MALT…GNVP) and 289–336 (SEPS…DPED). 2 stretches are compositionally biased toward acidic residues: residues 34–92 (LTDE…SDSD) and 119–129 (IEPDYDSDSST). Pro residues predominate over residues 294–305 (SQPPPLPAPKRP). A compositionally biased stretch (basic and acidic residues) spans 323-336 (EEEKQEWLKQDPED). 6 WD repeats span residues 410–449 (HPKG…EIRR), 536–580 (PSSG…APFK), 582–621 (IKGA…KTLQ), 622–661 (PGIR…KPYK), 665–704 (YHSR…DLMT), and 720–751 (TDGL…VWCS).

Belongs to the WD repeat BOP1/ERB1 family. As to quaternary structure, component of the NOP7 complex, composed of ERB1, NOP7 and YTM1. The complex is held together by ERB1, which interacts with NOP7 via its N-terminal domain and with YTM1 via a high-affinity interaction between the seven-bladed beta-propeller domains of the 2 proteins. The NOP7 complex associates with the 66S pre-ribosome.

It is found in the nucleus. The protein localises to the nucleolus. The protein resides in the nucleoplasm. In terms of biological role, component of the NOP7 complex, which is required for maturation of the 25S and 5.8S ribosomal RNAs and formation of the 60S ribosome. The chain is Ribosome biogenesis protein ERB1 from Coprinopsis cinerea (strain Okayama-7 / 130 / ATCC MYA-4618 / FGSC 9003) (Inky cap fungus).